The primary structure comprises 172 residues: Centrin-2 (172 aa).

Over residues 1–14 (MASNFKKTTMASSA) the composition is skewed to polar residues. The interval 1–31 (MASNFKKTTMASSAQRKRMSPKPELTEDQKQ) is disordered. The residue at position 2 (A2) is an N-acetylalanine. The segment at 2-25 (ASNFKKTTMASSAQRKRMSPKPEL) is required for self-assembly. At S20 the chain carries Phosphoserine. A Glycyl lysine isopeptide (Lys-Gly) (interchain with G-Cter in SUMO2) cross-link involves residue K22. T26 is subject to Phosphothreonine. 4 EF-hand domains span residues 28–63 (DQKQ…LGFE), 64–99 (PKKE…KMSE), 101–136 (DTKE…LGEN), and 137–172 (LTDE…TSLY). Ca(2+) is bound by residues D41, D43, T45, T47, and E52. D150, D152, D154, E156, and E161 together coordinate Ca(2+).

It belongs to the centrin family. In terms of assembly, monomer. Homooligomer. Interacts with CCP110, SFI1. Component of the XPC complex composed of XPC, RAD23B and CETN2. Component of the nuclear pore complex (NPC)-associated TREX-2 complex (transcription and export complex 2), composed of at least GANP, 2 copies of ENY2, PCID2, SEM1/DSS1, and either centrin CETN2 or centrin CETN3. The TREX-2 complex also associates with ALYREF/ALY and with the nucleoporin NUP153. Interacts with USP49. Forms a microtubule-associated complex with POC5, POC1B and FAM161A. Interacts with CCDC15. Ubiquitously expressed in all adult tissues tested, with strongest expression in brain, spleen, kidney, small intestine and ovary. Also expressed in the NIH 3T3 fibroblast cell line and peripheral blood lymphocytes.

The protein localises to the cytoplasm. The protein resides in the cytoskeleton. It localises to the microtubule organizing center. Its subcellular location is the centrosome. It is found in the centriole. The protein localises to the nucleus. The protein resides in the nucleus envelope. It localises to the nuclear pore complex. Its function is as follows. Plays a fundamental role in microtubule organizing center structure and function. Required for centriole duplication and correct spindle formation. Has a role in regulating cytokinesis and genome stability via cooperation with CALM1 and CCP110. Functionally, involved in global genome nucleotide excision repair (GG-NER) by acting as component of the XPC complex. Cooperatively with Rad23b appears to stabilize Xpc. In vitro, stimulates DNA binding of the Xpc:Rad23b dimer. In terms of biological role, the XPC complex is proposed to represent the first factor bound at the sites of DNA damage and together with other core recognition factors, Xpa, RPA and the TFIIH complex, is part of the pre-incision (or initial recognition) complex. The XPC complex recognizes a wide spectrum of damaged DNA characterized by distortions of the DNA helix such as single-stranded loops, mismatched bubbles or single-stranded overhangs. The orientation of XPC complex binding appears to be crucial for inducing a productive NER. XPC complex is proposed to recognize and to interact with unpaired bases on the undamaged DNA strand which is followed by recruitment of the TFIIH complex and subsequent scanning for lesions in the opposite strand in a 5'-to-3' direction by the NER machinery. Cyclobutane pyrimidine dimers (CPDs) which are formed upon UV-induced DNA damage esacpe detection by the XPC complex due to a low degree of structural perurbation. Instead they are detected by the UV-DDB complex which in turn recruits and cooperates with the XPC complex in the respective DNA repair. As a component of the TREX-2 complex, involved in the export of mRNAs to the cytoplasm through the nuclear pores. This chain is Centrin-2 (Cetn2), found in Mus musculus (Mouse).